The sequence spans 802 residues: MLVSYNWVKEFFQDFPLTAEELGEAITRTGIEIEGVEELSASLKNVVVGEVLSCERHPDAEKLNKCLVQTDEAEPVQIICGAPNVAAGQKVIVAKVGARLPGGLKIKRAKLRGEVSEGMICSLAELGFESKVVPKAYAEGIYVLPAHVETGVNAITLLGLDDAILDMAITPNRADALSMKGVAHEVGAIIHQKPAQPTEPDVSEKGKAEDFISVEVENPAETPYYAIKMVENIEIKESPLWLQTKLMKAGIRPHNNVVDVTNYINLLYGQPLHSFDYDKIGSKKIVVRSAKEQEEITTLDGEKRTLQAGHTVITNGVEPIAIAGVMGGEFSEVTENTTTVALEGAIFSSSSIGKASRELYLRTEASIRYDKGSDAWKVEKALAHGGALIAELSGGTLVGGVVEVDNREKAVNKIETSLTRINRILGTAITLTEIETIFDRLGFVLEVKNDALIIEVPTRRWDITIEADILEEVARIYGYDEIPVTLPATSTTGGLSDSQKARRVMRAYLEGAGLNQALTYSLTSKKDATRLALSDEKTVALSMPMSEEHSHLRTSIVPQLIRSASYNIARKNMDVALYEMGTVFYATEGDNLPIEQEHLAGLITGNWHIADWQKTPKPVDFFVLKGIVEGLVNKLGIKSELHWKQTEKEELHPGRTASLVLEGQEIGYLGALHPAVEANYDLKETYVFEINVAALLDATKEKVVYHPIPRYPEMTRDLALLVDKDTNHAAISQVIKEHGGKLLVDIELFDIFEGESLGENKKSLAYTLTFLDSERTLVEEDVQKATNKVVEALQEKLNAIIR.

Residues 40–155 (SASLKNVVVG…AHVETGVNAI (116 aa)) enclose the tRNA-binding domain. The region spanning 409–484 (KAVNKIETSL…RIYGYDEIPV (76 aa)) is the B5 domain. Mg(2+)-binding residues include Asp-462, Asp-468, Glu-471, and Glu-472. The FDX-ACB domain occupies 709–802 (PRYPEMTRDL…LQEKLNAIIR (94 aa)).

It belongs to the phenylalanyl-tRNA synthetase beta subunit family. Type 1 subfamily. Tetramer of two alpha and two beta subunits. The cofactor is Mg(2+).

The protein localises to the cytoplasm. It catalyses the reaction tRNA(Phe) + L-phenylalanine + ATP = L-phenylalanyl-tRNA(Phe) + AMP + diphosphate + H(+). The sequence is that of Phenylalanine--tRNA ligase beta subunit from Listeria monocytogenes serovar 1/2a (strain ATCC BAA-679 / EGD-e).